The sequence spans 1381 residues: MKAPAVLAPGILVLLFTLVQKSDGECKEALVKSEMNVNMKYQLPNFTAETPIQNVVLHKHHIYLGATNYIYVLNDKDLQKVAEYKTGPVLEHPDCFPCQDCSRKANLSGGAWKDNINMALLVDTYYDDQLISCGSVHRGTCQRHVLPLNNVADIQSEVYCMYSPQAEEPHQCPDCVVSALGTKVLLSEKDRFVTFFVGNTINSSYLPDHSLHSISVRRLKETQDGFKFLTDQSYIDVLPEFRDSYPIKYIHAFESNHFIYFLTVQRETLDAQTFHTRIIRFCSVDSGLHSYMEMPLECILTEKRRKRSTSEEVFNILQAAYVSKPGAHLAKQIGANLNDDILYGVFAQSKPDSAEPMNRSAVCAFPVKYVNEFFNKIVNKNNVRCLQHFYGPHHEHCFNRTLLRNSSGCEVRNDEYRTEFTTALQRVDLFMGQFNQVLLTSISTFIKGNLTIANLGTSEGRFMQVVVSRSGSSTPHVNFHLDSHPVSPEVIVEHPLNQNGYTLVVTGKKITKIPLNGLGCEHFQSCSQCLSAPPFVQCGWCHDKCVRLEECHNGTWTQEICLPTIYKVFPTSAPLEGGTTLTVCGWDFGFRKNNKLDSKKTKVLLGNESCTLTLSESTSNTLKCTVGPAMNERFNISITVSNSRGTARYSTFSYVDPIITSISPSYGPKTGGTLLTLTGKYLNSGNSRHISIGGKTCTLKSVSDSILECYTPAQTTPTEFPVKLKIDLANREMNSFSYREDPIVYEIHPTKSFISGGSTITGVGKNLNSVSVLRMVINVREAGRNFTVACQHRSNSEIICCTTPSLQQLNLQLPLKTKAFFMLDGIHSKYFDLIYVHNPVFKPFEKPVMISIGNENVLEIKGNDIDPEAVKGEVLKVGNKSCENIHSHSEAVLCTVPSDLLKLNSELNIEWKQAVSSTILGKVIVQPDQNFTGLIVGVVSISIILLLLLGLFLWLKRRKQIKDLGSELVRYDARVHTPHLDRLVSARSVSPTTEMVSNESVDYRATFPEDQFPNSSQNGSCRQVQYPLTDLSPILTSGDSDISSPLLQNTVHIDLSALNPELVQAVQHVVIGPSSLIVHFNEVIGRGHFGCVYHGTLLDNDDKKIHCAVKSLNRITDIGEVSQFLTEGIIMKDFSHPNVLSLLGICLRSEGSPLVVLPYMKHGDLRNFIRNETHNPTVKDLIGFGLQVAKGMKYLASKKFVHRDLAARNCMLDEKFTVKVADFGLARDMYDKEYYSVHNKTGAKLPVKWMALESLQTQKFTTKSDVWSFGVLLWELMTRGAPPYPDVNTFDITVYLLQGRRLLQPEYCPDPLYEVMLKCWHPKAELRPSFSELVSRISAIFSTFIGEHYVHVNATYVNVKCVAPYPSLLSSQDNVDGEVDT.

Positions 1–24 (MKAPAVLAPGILVLLFTLVQKSDG) are cleaved as a signal peptide. Topologically, residues 25 to 934 (ECKEALVKSE…VQPDQNFTGL (910 aa)) are extracellular. Residues 27 to 515 (KEALVKSEMN…TGKKITKIPL (489 aa)) form the Sema domain. A glycan (N-linked (GlcNAc...) asparagine) is linked at N45. Intrachain disulfides connect C95-C101, C98-C160, C133-C141, and C172-C175. N-linked (GlcNAc...) asparagine glycosylation is present at N106. Residues N202 and N358 are each glycosylated (N-linked (GlcNAc...) asparagine). 2 disulfide bridges follow: C298-C363 and C385-C397. 3 N-linked (GlcNAc...) asparagine glycosylation sites follow: N399, N405, and N449. 4 disulfide bridges follow: C520–C538, C526–C561, C529–C545, and C541–C551. N-linked (GlcNAc...) asparagine glycosylation occurs at N553. 3 IPT/TIG domains span residues 563–655 (PTIY…FSYV), 657–739 (PIIT…FSYR), and 742–836 (PIVY…LIYV). O-linked (Man) threonine glycosylation is present at T582. N-linked (GlcNAc...) asparagine glycans are attached at residues N607 and N635. 2 O-linked (Man) threonine glycosylation sites follow: T676 and T761. Residues N785, N879, and N930 are each glycosylated (N-linked (GlcNAc...) asparagine). Residues 935-955 (IVGVVSISIILLLLLGLFLWL) traverse the membrane as a helical segment. Topologically, residues 956 to 1381 (KRRKQIKDLG…QDNVDGEVDT (426 aa)) are cytoplasmic. S966 is subject to Phosphoserine. T977 bears the Phosphothreonine mark. A phosphoserine mark is found at S990, S997, and S1000. The residue at position 1003 (Y1003) is a Phosphotyrosine. The region spanning 1078–1345 (VHFNEVIGRG…RISAIFSTFI (268 aa)) is the Protein kinase domain. Residues 1084 to 1092 (IGRGHFGCV) and K1110 each bind ATP. Catalysis depends on D1204, which acts as the Proton acceptor. The interval 1212 to 1381 (LDEKFTVKVA…QDNVDGEVDT (170 aa)) is interaction with RANBP9. At Y1230 the chain carries Phosphotyrosine. A phosphotyrosine; by autocatalysis mark is found at Y1234 and Y1235. T1289 carries the phosphothreonine modification. The tract at residues 1320–1359 (WHPKAELRPSFSELVSRISAIFSTFIGEHYVHVNATYVNV) is interaction with MUC20. 2 positions are modified to phosphotyrosine; by autocatalysis: Y1349 and Y1356. Y1365 is subject to Phosphotyrosine.

The protein belongs to the protein kinase superfamily. Tyr protein kinase family. As to quaternary structure, heterodimer made of an alpha chain (50 kDa) and a beta chain (145 kDa) which are disulfide linked. Binds PLXNB1. Interacts when phosphorylated with downstream effectors including STAT3, PIK3R1, SRC, PCLG1, GRB2 and GAB1. Interacts with SPSB1, SPSB2 and SPSB4. Interacts with INPP5D/SHIP1. When phosphorylated at Tyr-1356, interacts with INPPL1/SHIP2. Interacts with RANBP9 and RANBP10, as well as SPSB1, SPSB2, SPSB3 and SPSB4. SPSB1 binding occurs in the presence and in the absence of HGF, however HGF treatment has a positive effect on this interaction. Interacts with MUC20; prevents interaction with GRB2 and suppresses hepatocyte growth factor-induced cell proliferation. Interacts with GRB10. Interacts with PTPN1 and PTPN2. Interacts with HSP90AA1 and HSP90AB1; the interaction suppresses MET kinase activity. Interacts with tensin TNS3. Interacts (when phosphorylated) with tensin TNS4 (via SH2 domain); the interaction increases MET protein stability by inhibiting MET endocytosis and subsequent lysosomal degradation. Autophosphorylated in response to ligand binding on Tyr-1234 and Tyr-1235 in the kinase domain leading to further phosphorylation of Tyr-1349 and Tyr-1356 in the C-terminal multifunctional docking site. Dephosphorylated by PTPRJ at Tyr-1349 and Tyr-1365. Dephosphorylated by PTPN1 and PTPN2. Post-translationally, ubiquitinated. Ubiquitination by CBL regulates the receptor stability and activity through proteasomal degradation. In terms of processing, O-mannosylation of IPT/TIG domains by TMEM260 is required for protein maturation. O-mannosylated residues are composed of single mannose glycans that are not elongated or modified.

The protein resides in the membrane. It catalyses the reaction L-tyrosyl-[protein] + ATP = O-phospho-L-tyrosyl-[protein] + ADP + H(+). Its activity is regulated as follows. In its inactive state, the C-terminal tail interacts with the catalytic domain and inhibits the kinase activity. Upon ligand binding, the C-terminal tail is displaced and becomes phosphorylated, thus increasing the kinase activity. Its function is as follows. Receptor tyrosine kinase that transduces signals from the extracellular matrix into the cytoplasm by binding to hepatocyte growth factor/HGF ligand. Regulates many physiological processes including proliferation, scattering, morphogenesis and survival. Ligand binding at the cell surface induces autophosphorylation of MET on its intracellular domain that provides docking sites for downstream signaling molecules. Following activation by ligand, interacts with the PI3-kinase subunit PIK3R1, PLCG1, SRC, GRB2, STAT3 or the adapter GAB1. Recruitment of these downstream effectors by MET leads to the activation of several signaling cascades including the RAS-ERK, PI3 kinase-AKT, or PLCgamma-PKC. The RAS-ERK activation is associated with the morphogenetic effects while PI3K/AKT coordinates prosurvival effects. During embryonic development, MET signaling plays a role in gastrulation, development and migration of muscles and neuronal precursors, angiogenesis and kidney formation. In adults, participates in wound healing as well as organ regeneration and tissue remodeling. Also promotes differentiation and proliferation of hematopoietic cells. The chain is Hepatocyte growth factor receptor (MET) from Equus caballus (Horse).